We begin with the raw amino-acid sequence, 164 residues long: MEMTNAQRLILSNQYKMMTMLDPANAERYRRLQTIIERGYGLQMRELDREFGELKEETCRTIIDIMEMYHALHVSWSNLHDQQSIDERRVTFLGFDAATEARYLGYVRFMVNVEGRYTHFDAGTHGFNAQTPMWEKYQRMLNVWHACPRQYHLSANEINQIINA.

This sequence belongs to the UPF0304 family.

The chain is UPF0304 protein YfbU from Escherichia coli O127:H6 (strain E2348/69 / EPEC).